Consider the following 952-residue polypeptide: Protein translocase subunit SecA (952 aa).

ATP-binding positions include Gln-135, 153-157 (GEGKT), and Asp-575. The span at 916–930 (VSAKAATQPAAPAAK) shows a compositional bias: low complexity. Residues 916–952 (VSAKAATQPAAPAAKEVGRNDPCPCGSGKKYKKCCGK) are disordered. Residues Cys-938, Cys-940, Cys-949, and Cys-950 each coordinate Zn(2+).

The protein belongs to the SecA family. In terms of assembly, monomer and homodimer. Part of the essential Sec protein translocation apparatus which comprises SecA, SecYEG and auxiliary proteins SecDF. Other proteins may also be involved. It depends on Zn(2+) as a cofactor.

The protein localises to the cell membrane. Its subcellular location is the cytoplasm. The enzyme catalyses ATP + H2O + cellular proteinSide 1 = ADP + phosphate + cellular proteinSide 2.. Its function is as follows. Part of the Sec protein translocase complex. Interacts with the SecYEG preprotein conducting channel. Has a central role in coupling the hydrolysis of ATP to the transfer of proteins into and across the cell membrane, serving as an ATP-driven molecular motor driving the stepwise translocation of polypeptide chains across the membrane. The chain is Protein translocase subunit SecA from Dehalococcoides mccartyi (strain ATCC BAA-2266 / KCTC 15142 / 195) (Dehalococcoides ethenogenes (strain 195)).